Consider the following 436-residue polypeptide: UDP-N-acetylmuramate--L-alanine ligase (436 aa).

108 to 114 (GAHGKTS) is a binding site for ATP.

Belongs to the MurCDEF family.

It localises to the cytoplasm. It carries out the reaction UDP-N-acetyl-alpha-D-muramate + L-alanine + ATP = UDP-N-acetyl-alpha-D-muramoyl-L-alanine + ADP + phosphate + H(+). The protein operates within cell wall biogenesis; peptidoglycan biosynthesis. Functionally, cell wall formation. In Bacillus cereus (strain G9842), this protein is UDP-N-acetylmuramate--L-alanine ligase.